The following is a 300-amino-acid chain: UPF0282 protein TON_1363 (300 aa).

Belongs to the UPF0282 family.

The polypeptide is UPF0282 protein TON_1363 (Thermococcus onnurineus (strain NA1)).